A 224-amino-acid chain; its full sequence is BOS complex subunit TMEM147 (224 aa).

The chain crosses the membrane as a helical span at residues methionine 1–tyrosine 21. Residues lysine 22–lysine 34 are Cytoplasmic-facing. The helical transmembrane segment at cysteine 35–proline 58 threads the bilayer. Over threonine 59 to aspartate 66 the chain is Lumenal. The chain crosses the membrane as a helical span at residues phenylalanine 67–methionine 88. Residues serine 89–lysine 98 lie on the Cytoplasmic side of the membrane. A helical membrane pass occupies residues isoleucine 99–arginine 124. The Lumenal portion of the chain corresponds to glycine 125–aspartate 129. The helical transmembrane segment at tryptophan 130–methionine 155 threads the bilayer. Topologically, residues isoleucine 156–threonine 164 are cytoplasmic. The helical transmembrane segment at phenylalanine 165–valine 187 threads the bilayer. Topologically, residues histidine 188–serine 194 are lumenal. The chain crosses the membrane as a helical span at residues tryptophan 195 to tyrosine 216. The Cytoplasmic portion of the chain corresponds to valine 217 to serine 224.

Belongs to the TMEM147 family. Component of the back of Sec61 (BOS) complex, composed of NCLN/Nicalin, NOMO1 and TMEM147. The BOS complex is part of the multi-pass translocon (MPT) complex, composed of three subcomplexes, the GEL complex (composed of RAB5IF/OPTI and TMCO1), the BOS complex (composed of NCLN/Nicalin, NOMO1 and TMEM147) and the PAT complex (composed of WDR83OS/Asterix and CCDC47). The MPT complex associates with the SEC61 complex. Interacts with CHRM3, CHRM1 and AVPR2. Interacts with LBR; promoting LBR localization to the nucleus inner membrane. Interacts with DHCR7.

The protein resides in the endoplasmic reticulum membrane. Its subcellular location is the nucleus membrane. It localises to the cell membrane. Component of the multi-pass translocon (MPT) complex that mediates insertion of multi-pass membrane proteins into the lipid bilayer of membranes. The MPT complex takes over after the SEC61 complex: following membrane insertion of the first few transmembrane segments of proteins by the SEC61 complex, the MPT complex occludes the lateral gate of the SEC61 complex to promote insertion of subsequent transmembrane regions. Also acts as a negative regulator of CHRM3 function, most likely by interfering with its trafficking to the cell membrane. Negatively regulates CHRM3-mediated calcium mobilization and activation of RPS6KA1/p90RSK activity. Regulates LBR localization to the nucleus inner membrane. In Canis lupus familiaris (Dog), this protein is BOS complex subunit TMEM147.